A 224-amino-acid polypeptide reads, in one-letter code: Pre-hexon-linking protein VIII (224 aa).

At T64 the chain carries Phosphothreonine; by host. Residues 112–154 (RQPSPSHIDIKDTMLAGTGIQLGEDIPSVSWIRPDGIFQLGGG) constitute a propeptide that is removed on maturation.

This sequence belongs to the adenoviridae hexon-linking protein family. In terms of assembly, interacts with the peripentonal hexons as well as the hexons in the facets. Part of a complex composed of the core-capsid bridging protein, the endosome lysis protein VI and the hexon-linking protein VIII; these interactions bridge the virus core to the capsid. In terms of processing, cleaved by the viral protease during virion maturation. May cause the middle segment to be shed from the capsid.

Its subcellular location is the virion. The protein localises to the host nucleus. Structural component of the virion that acts as a cement protein on the capsid interior and which glue the peripentonal hexons and group-of-nine hexons together. The chain is Pre-hexon-linking protein VIII from Canine adenovirus serotype 1 (strain CLL) (CAdV-1).